Here is a 50-residue protein sequence, read N- to C-terminus: Ampulexin 1 (50 aa).

The first 26 residues, 1 to 26 (MKAIMVLFYVMMLTIIASVSMVNGSP), serve as a signal peptide directing secretion.

In terms of assembly, monomer. In terms of tissue distribution, expressed in venom sac and, to a lesser extent, in venom gland. Not expressed in brain.

It is found in the secreted. Amphipathic peptide which probably adopts an alpha-helical structure. When injected in subesophageal ganglia of cockroach P.americana, a natural host for larvae of A.compressa, dampens the escape response for about 1 hour which may contribute to early stages of hypokinesia. Has no antimicrobial activity against E.coli DH5alpha or B.thuringiensis. Is not cytotoxic in vitro. The sequence is that of Ampulexin 1 from Ampulex compressa (Emerald cockroach wasp).